The chain runs to 406 residues: Arginine deiminase (406 aa).

Cys-396 serves as the catalytic Amidino-cysteine intermediate.

Belongs to the arginine deiminase family.

It localises to the cytoplasm. The catalysed reaction is L-arginine + H2O = L-citrulline + NH4(+). It participates in amino-acid degradation; L-arginine degradation via ADI pathway; carbamoyl phosphate from L-arginine: step 1/2. In Vibrio vulnificus (strain YJ016), this protein is Arginine deiminase.